A 170-amino-acid chain; its full sequence is N-alpha-acetyltransferase 50 (170 aa).

In terms of domain architecture, N-acetyltransferase spans 6-155 (IELGDVTPHN…DAHVLQKNLK (150 aa)). Y31 contacts substrate. Y73 is a catalytic residue. M75 contacts substrate. Residue 77–90 (LGCLAPYRRLGIGT) participates in acetyl-CoA binding. 79-90 (CLAPYRRLGIGT) is a binding site for CoA. Residue H112 is part of the active site. 117 to 126 (NESAIDFYRK) serves as a coordination point for CoA. The substrate stretch occupies residues 138–141 (YYKR).

This sequence belongs to the acetyltransferase family. GNAT subfamily.

Its subcellular location is the cytoplasm. The protein localises to the nucleus. It catalyses the reaction N-terminal L-methionyl-L-alanyl-[protein] + acetyl-CoA = N-terminal N(alpha)-acetyl-L-methionyl-L-alanyl-[protein] + CoA + H(+). The catalysed reaction is N-terminal L-methionyl-L-seryl-[protein] + acetyl-CoA = N-terminal N(alpha)-acetyl-L-methionyl-L-seryl-[protein] + CoA + H(+). It carries out the reaction N-terminal L-methionyl-L-valyl-[protein] + acetyl-CoA = N-terminal N(alpha)-acetyl-L-methionyl-L-valyl-[protein] + CoA + H(+). The enzyme catalyses N-terminal L-methionyl-L-threonyl-[protein] + acetyl-CoA = N-terminal N(alpha)-acetyl-L-methionyl-L-threonyl-[protein] + CoA + H(+). It catalyses the reaction N-terminal L-methionyl-L-lysyl-[protein] + acetyl-CoA = N-terminal N(alpha)-acetyl-L-methionyl-L-lysyl-[protein] + CoA + H(+). The catalysed reaction is N-terminal L-methionyl-L-leucyl-[protein] + acetyl-CoA = N-terminal N(alpha)-acetyl-L-methionyl-L-leucyl-[protein] + CoA + H(+). It carries out the reaction N-terminal L-methionyl-L-phenylalanyl-[protein] + acetyl-CoA = N-terminal N(alpha)-acetyl-L-methionyl-L-phenylalanyl-[protein] + CoA + H(+). The enzyme catalyses N-terminal L-methionyl-L-tyrosyl-[protein] + acetyl-CoA = N-terminal N(alpha)-acetyl-L-methionyl-L-tyrosyl-[protein] + CoA + H(+). Its function is as follows. N-alpha-acetyltransferase that acetylates the N-terminus of proteins that retain their initiating methionine. Has a broad substrate specificity: able to acetylate the initiator methionine of most peptides, except for those with a proline in second position. Also displays N-epsilon-acetyltransferase activity by mediating acetylation of the side chain of specific lysines on proteins. The relevance of N-epsilon-acetyltransferase activity is however unclear. Required for sister chromatid cohesion during mitosis by promoting binding of CDCA5/sororin to cohesin. This is N-alpha-acetyltransferase 50 (naa50) from Xenopus laevis (African clawed frog).